The following is a 548-amino-acid chain: Chaperonin GroEL (548 aa).

ATP contacts are provided by residues threonine 30 to proline 33, lysine 51, aspartate 87 to threonine 91, glycine 415, and aspartate 494.

It belongs to the chaperonin (HSP60) family. As to quaternary structure, forms a cylinder of 14 subunits composed of two heptameric rings stacked back-to-back. Interacts with the co-chaperonin GroES.

It is found in the cytoplasm. It carries out the reaction ATP + H2O + a folded polypeptide = ADP + phosphate + an unfolded polypeptide.. Functionally, together with its co-chaperonin GroES, plays an essential role in assisting protein folding. The GroEL-GroES system forms a nano-cage that allows encapsulation of the non-native substrate proteins and provides a physical environment optimized to promote and accelerate protein folding. In Oleispira antarctica, this protein is Chaperonin GroEL.